The following is a 447-amino-acid chain: Na(+)/H(+) antiporter NhaA 2 (447 aa).

Transmembrane regions (helical) follow at residues 30-50 (FIHI…LAVL), 81-101 (LHKW…ALEL), 117-137 (LLSI…YLLL), 146-166 (GWGT…ALLG), 175-195 (IFML…VAIG), 199-219 (AVDW…RAMA), 220-240 (FLGV…WLVI), 315-335 (LLHP…NAGV), 350-370 (VFVG…WIAV), 383-403 (WGMV…ALFI), and 415-435 (AAKL…FLCL).

Belongs to the NhaA Na(+)/H(+) (TC 2.A.33) antiporter family.

The protein resides in the cell inner membrane. It catalyses the reaction Na(+)(in) + 2 H(+)(out) = Na(+)(out) + 2 H(+)(in). In terms of biological role, na(+)/H(+) antiporter that extrudes sodium in exchange for external protons. This is Na(+)/H(+) antiporter NhaA 2 from Vibrio vulnificus (strain CMCP6).